The following is an 81-amino-acid chain: Antimicrobial peptide D2 (81 aa).

Positions 1-31 (MAKTVLGIHVTFLTLLFAVILLNDVMYTPVE) are cleaved as a signal peptide. 4 disulfides stabilise this stretch: cysteine 34-cysteine 81, cysteine 45-cysteine 66, cysteine 51-cysteine 75, and cysteine 55-cysteine 77.

Functionally, antimicrobial peptide probably active against fungi like B.sorokiniana, F.oxysporum, F.graminearum, F.avenaceum, B.cinerea, P.beta, P.infestans and P.debaryanum. The chain is Antimicrobial peptide D2 from Stellaria media (Common chickweed).